The primary structure comprises 500 residues: L-arabinose isomerase (500 aa).

Mn(2+) contacts are provided by E306, E333, H350, and H450.

The protein belongs to the arabinose isomerase family. In terms of assembly, homohexamer. Mn(2+) serves as cofactor.

The enzyme catalyses beta-L-arabinopyranose = L-ribulose. Its pathway is carbohydrate degradation; L-arabinose degradation via L-ribulose; D-xylulose 5-phosphate from L-arabinose (bacterial route): step 1/3. Functionally, catalyzes the conversion of L-arabinose to L-ribulose. The polypeptide is L-arabinose isomerase (Klebsiella pneumoniae (strain 342)).